Here is a 357-residue protein sequence, read N- to C-terminus: Peptide chain release factor 1 (357 aa).

At Q232 the chain carries N5-methylglutamine. Positions D281 to R305 are enriched in basic and acidic residues. Positions D281–F309 are disordered.

It belongs to the prokaryotic/mitochondrial release factor family. In terms of processing, methylated by PrmC. Methylation increases the termination efficiency of RF1.

The protein resides in the cytoplasm. Functionally, peptide chain release factor 1 directs the termination of translation in response to the peptide chain termination codons UAG and UAA. This is Peptide chain release factor 1 from Nitratidesulfovibrio vulgaris (strain DSM 19637 / Miyazaki F) (Desulfovibrio vulgaris).